Reading from the N-terminus, the 364-residue chain is Peptide chain release factor 1 (364 aa).

Glutamine 237 bears the N5-methylglutamine mark.

It belongs to the prokaryotic/mitochondrial release factor family. Methylated by PrmC. Methylation increases the termination efficiency of RF1.

It is found in the cytoplasm. Functionally, peptide chain release factor 1 directs the termination of translation in response to the peptide chain termination codons UAG and UAA. This is Peptide chain release factor 1 from Mycoplasma mycoides subsp. mycoides SC (strain CCUG 32753 / NCTC 10114 / PG1).